Here is a 192-residue protein sequence, read N- to C-terminus: Ion-translocating oxidoreductase complex subunit A (192 aa).

A run of 6 helical transmembrane segments spans residues 5–25 (ALIL…FLGL), 39–59 (TGMG…SYLV), 65–85 (APLG…AAVV), 102–122 (VLGI…VALL), 134–154 (ALYG…FASI), and 171–191 (AIAL…IGLV).

It belongs to the NqrDE/RnfAE family. In terms of assembly, the complex is composed of six subunits: RnfA, RnfB, RnfC, RnfD, RnfE and RnfG.

It localises to the cell inner membrane. Its function is as follows. Part of a membrane-bound complex that couples electron transfer with translocation of ions across the membrane. The polypeptide is Ion-translocating oxidoreductase complex subunit A (Thioalkalivibrio sulfidiphilus (strain HL-EbGR7)).